Consider the following 253-residue polypeptide: Methionine aminopeptidase (253 aa).

His78 is a binding site for substrate. 3 residues coordinate a divalent metal cation: Asp95, Asp106, and His169. His176 contacts substrate. A divalent metal cation contacts are provided by Glu206 and Glu237.

The protein belongs to the peptidase M24A family. Methionine aminopeptidase type 1 subfamily. In terms of assembly, monomer. It depends on Co(2+) as a cofactor. The cofactor is Zn(2+). Requires Mn(2+) as cofactor. Fe(2+) serves as cofactor.

It carries out the reaction Release of N-terminal amino acids, preferentially methionine, from peptides and arylamides.. Its function is as follows. Removes the N-terminal methionine from nascent proteins. The N-terminal methionine is often cleaved when the second residue in the primary sequence is small and uncharged (Met-Ala-, Cys, Gly, Pro, Ser, Thr, or Val). Requires deformylation of the N(alpha)-formylated initiator methionine before it can be hydrolyzed. This is Methionine aminopeptidase from Helicobacter pylori (strain ATCC 700392 / 26695) (Campylobacter pylori).